Consider the following 131-residue polypeptide: UPF0102 protein AZC_4471 (131 aa).

The protein belongs to the UPF0102 family.

In Azorhizobium caulinodans (strain ATCC 43989 / DSM 5975 / JCM 20966 / LMG 6465 / NBRC 14845 / NCIMB 13405 / ORS 571), this protein is UPF0102 protein AZC_4471.